The following is a 470-amino-acid chain: UDP-N-acetylmuramoylalanine--D-glutamate ligase (470 aa).

124-130 (GTNGKTT) contacts ATP.

Belongs to the MurCDEF family.

It is found in the cytoplasm. It catalyses the reaction UDP-N-acetyl-alpha-D-muramoyl-L-alanine + D-glutamate + ATP = UDP-N-acetyl-alpha-D-muramoyl-L-alanyl-D-glutamate + ADP + phosphate + H(+). It participates in cell wall biogenesis; peptidoglycan biosynthesis. Cell wall formation. Catalyzes the addition of glutamate to the nucleotide precursor UDP-N-acetylmuramoyl-L-alanine (UMA). The polypeptide is UDP-N-acetylmuramoylalanine--D-glutamate ligase (Prochlorococcus marinus (strain SARG / CCMP1375 / SS120)).